The primary structure comprises 87 residues: DNA-directed RNA polymerase subunit omega (87 aa).

It belongs to the RNA polymerase subunit omega family. The RNAP catalytic core consists of 2 alpha, 1 beta, 1 beta' and 1 omega subunit. When a sigma factor is associated with the core the holoenzyme is formed, which can initiate transcription.

The catalysed reaction is RNA(n) + a ribonucleoside 5'-triphosphate = RNA(n+1) + diphosphate. In terms of biological role, promotes RNA polymerase assembly. Latches the N- and C-terminal regions of the beta' subunit thereby facilitating its interaction with the beta and alpha subunits. The protein is DNA-directed RNA polymerase subunit omega of Pseudomonas fluorescens (strain Pf0-1).